A 401-amino-acid polypeptide reads, in one-letter code: Ureide permease 4 (401 aa).

The Extracellular portion of the chain corresponds to 1–10 (MYVVESKAGA). A helical transmembrane segment spans residues 11–31 (IGCMILSLCCLGSWPAILTLL). Over 32–40 (ERRGRLPQH) the chain is Cytoplasmic. The helical transmembrane segment at 41–61 (TFLDFATANLLAAIVIAFSLG) threads the bilayer. Residues 62–81 (EIGKSTFLKPDFTTQLPQDN) lie on the Extracellular side of the membrane. Residues 82–102 (WPSVLLAVAGGVLLSIGNLAT) form a helical membrane-spanning segment. Residues 103–104 (QY) lie on the Cytoplasmic side of the membrane. Residues 105 to 125 (AFAFVGLSVTEVITASITVVI) traverse the membrane as a helical segment. Topologically, residues 126–141 (GTTLNYFLDNKINKAE) are extracellular. A helical membrane pass occupies residues 142–162 (ILFPGVGCFLIAVFLGAAVHA). Residues 163 to 231 (SNAADVKEKL…KRAIKVFGKS (69 aa)) lie on the Cytoplasmic side of the membrane. 224-231 (AIKVFGKS) serves as a coordination point for ATP. Residues 232–252 (IMIGLFITLFAGISLSLFSPA) form a helical membrane-spanning segment. The Extracellular portion of the chain corresponds to 253 to 275 (FNLATNDQWSTLPKGVPKLVVYT). Residues 276–296 (AFFYFSIAGFLISLILNLIFL) form a helical membrane-spanning segment. Over 297 to 318 (YRPMVGLARSSLKKYIYDSKGR) the chain is Cytoplasmic. The chain crosses the membrane as a helical span at residues 319–339 (GWAVFAGFLCGFGNGLQFMGG). Topologically, residues 340–344 (QAAGY) are extracellular. The helical transmembrane segment at 345 to 365 (AAADSVQALPLVSTFWGIVLF) threads the bilayer. At 366 to 374 (GEYRKSSKR) the chain is on the cytoplasmic side. A helical transmembrane segment spans residues 375-395 (TYALLVSMLAMFVAAVAILMA). Residues 396-401 (SSGHRK) are Extracellular-facing.

Belongs to the plant ureide permease (TC 2.A.7.19) family. As to expression, expressed in developing seedlings, flower filaments and stigma, and the top and bottom parts of carpels in siliques.

The protein resides in the membrane. Functionally, proton-coupled transporter that transports a wide spectrum of oxo derivatives of heterocyclic nitrogen compounds. The chain is Ureide permease 4 from Arabidopsis thaliana (Mouse-ear cress).